A 124-amino-acid chain; its full sequence is Large ribosomal subunit protein eL22y (124 aa).

Belongs to the eukaryotic ribosomal protein eL22 family.

This is Large ribosomal subunit protein eL22y (RPL22C) from Arabidopsis thaliana (Mouse-ear cress).